A 145-amino-acid polypeptide reads, in one-letter code: Large ribosomal subunit protein uL13 (145 aa).

Belongs to the universal ribosomal protein uL13 family. As to quaternary structure, part of the 50S ribosomal subunit.

In terms of biological role, this protein is one of the early assembly proteins of the 50S ribosomal subunit, although it is not seen to bind rRNA by itself. It is important during the early stages of 50S assembly. This chain is Large ribosomal subunit protein uL13, found in Staphylococcus haemolyticus (strain JCSC1435).